The following is a 796-amino-acid chain: High affinity nerve growth factor receptor (796 aa).

The first 32 residues, 1–32 (MLRGGRRGQLGWHSWAAGPGSLLAWLILASAG), serve as a signal peptide directing secretion. Residues 33–423 (AAPCPDACCP…TPFGVSVAVG (391 aa)) lie on the Extracellular side of the membrane. 2 disulfides stabilise this stretch: cysteine 36-cysteine 41 and cysteine 40-cysteine 50. N-linked (GlcNAc...) asparagine glycosylation is found at asparagine 67, asparagine 95, asparagine 121, asparagine 188, asparagine 202, asparagine 253, asparagine 262, asparagine 281, asparagine 318, asparagine 323, asparagine 338, asparagine 358, and asparagine 401. LRR repeat units follow at residues 90–113 (LGELRNLTIVKSGLRFVAPDAFHF) and 116–137 (RLSRLNLSFNALESLSWKTVQG). In terms of domain architecture, LRRCT spans 148-193 (NPLHCSCALRWLQRWEEEGLGGVPEQKLQCHGQGPLAHMPNASCGV). Cysteine 154 and cysteine 191 are joined by a disulfide. 2 Ig-like C2-type domains span residues 194 to 283 (PTLK…VNVS) and 299 to 365 (WCIP…LAAN). Cysteine 215 and cysteine 265 form a disulfide bridge. The cysteines at positions 300 and 345 are disulfide-linked. Residues 424-439 (LAVFACLFLSTLLLVL) traverse the membrane as a helical segment. The Cytoplasmic segment spans residues 440 to 796 (NKCGRRNKFG…APPVYLDVLG (357 aa)). The tract at residues 469–490 (MTLGGSSLSPTEGKGSGLQGHI) is interaction with SQSTM1. Tyrosine 496 is modified (phosphotyrosine; by autocatalysis). The Protein kinase domain maps to 510-781 (IVLKWELGEG…HSIKDVHARL (272 aa)). 516-524 (LGEGAFGKV) contributes to the ATP binding site. A DXXLL motif is present at residues 537-541 (DKMLV). Lysine 544 contacts ATP. The DXXLL signature appears at 607–611 (DAKLL). The active-site Proton acceptor is the aspartate 650. A phosphotyrosine; by autocatalysis mark is found at tyrosine 676, tyrosine 680, tyrosine 681, and tyrosine 791.

This sequence belongs to the protein kinase superfamily. Tyr protein kinase family. Insulin receptor subfamily. As to quaternary structure, exists in a dynamic equilibrium between monomeric (low affinity) and dimeric (high affinity) structures. Homodimerization is induced by binding of a NGF dimer. Interacts with SQSTM1; bridges NTRK1 to NGFR. Forms a ternary complex with NGFR and KIDINS220; this complex is affected by the expression levels of KIDINS220 and an increase in KIDINS220 expression leads to a decreased association of NGFR and NTRK1. Interacts with SH2D1A; regulates NTRK1. Interacts (phosphorylated upon activation by NGF) with SHC1; mediates SHC1 phosphorylation and activation. Interacts (phosphorylated upon activation by NGF) with PLCG1; mediates PLCG1 phosphorylation and activation. Interacts (phosphorylated) with SH2B1 and SH2B2. Interacts with GRB2. Interacts with PIK3R1. Interacts with FRS2. Interacts with SORT1; may regulate NTRK1 anterograde axonal transport. Interacts with RAB7A. Found in a complex, at least composed of KIDINS220, MAGI2, NTRK1 and RAPGEF2; the complex is mainly formed at late endosomes in a nerve growth factor (NGF)-dependent manner. Interacts with RAPGEF2; the interaction is strengthened after NGF stimulation. Interacts with PTPRS. Interacts with USP36; USP36 does not deubiquitinate NTRK1. Interacts with GGA3. Interacts with TSPAN1; this interaction promotes NTRK1 stability. Post-translationally, ligand-mediated autophosphorylation. Interaction with SQSTM1 is phosphotyrosine-dependent. Autophosphorylation at Tyr-496 mediates interaction and phosphorylation of SHC1. In terms of processing, N-glycosylated. Isoform TrkA-I and isoform TrkA-II are N-glycosylated. Ubiquitinated. Undergoes polyubiquitination upon activation; regulated by NGFR. Ubiquitination by NEDD4L leads to degradation. Ubiquitination regulates the internalization of the receptor. Isoform TrkA-I is found in most non-neuronal tissues. Isoform TrkA-II is primarily expressed in neuronal cells. TrkA-III is specifically expressed by pluripotent neural stem and neural crest progenitors.

The protein resides in the cell membrane. The protein localises to the early endosome membrane. It localises to the late endosome membrane. It is found in the recycling endosome membrane. The enzyme catalyses L-tyrosyl-[protein] + ATP = O-phospho-L-tyrosyl-[protein] + ADP + H(+). The pro-survival signaling effect of NTRK1 in neurons requires its endocytosis into signaling early endosomes and its retrograde axonal transport. This is regulated by different proteins including CFL1, RAC1 and SORT1. NTF3 is unable to induce this signaling probably due to the lability of the NTF3-NTRK1 complex in endosomes. SH2D1A inhibits the autophosphorylation of the receptor, and alters the recruitment and activation of downstream effectors and signaling cascades. Regulated by NGFR. Functionally, receptor tyrosine kinase involved in the development and the maturation of the central and peripheral nervous systems through regulation of proliferation, differentiation and survival of sympathetic and nervous neurons. High affinity receptor for NGF which is its primary ligand. Can also bind and be activated by NTF3/neurotrophin-3. However, NTF3 only supports axonal extension through NTRK1 but has no effect on neuron survival. Upon dimeric NGF ligand-binding, undergoes homodimerization, autophosphorylation and activation. Recruits, phosphorylates and/or activates several downstream effectors including SHC1, FRS2, SH2B1, SH2B2 and PLCG1 that regulate distinct overlapping signaling cascades driving cell survival and differentiation. Through SHC1 and FRS2 activates a GRB2-Ras-MAPK cascade that regulates cell differentiation and survival. Through PLCG1 controls NF-Kappa-B activation and the transcription of genes involved in cell survival. Through SHC1 and SH2B1 controls a Ras-PI3 kinase-AKT1 signaling cascade that is also regulating survival. In absence of ligand and activation, may promote cell death, making the survival of neurons dependent on trophic factors. Its function is as follows. Resistant to NGF, it constitutively activates AKT1 and NF-kappa-B and is unable to activate the Ras-MAPK signaling cascade. Antagonizes the anti-proliferative NGF-NTRK1 signaling that promotes neuronal precursors differentiation. Isoform TrkA-III promotes angiogenesis and has oncogenic activity when overexpressed. This chain is High affinity nerve growth factor receptor (NTRK1), found in Homo sapiens (Human).